The chain runs to 435 residues: Exopolysaccharide production protein ExoQ (435 aa).

Transmembrane regions (helical) follow at residues 11-31 (PGAN…VFAY), 35-55 (FGQV…LVDY), 65-85 (YLWI…SAAP), 117-137 (GMIA…TYHY), 156-176 (LGFY…VLGE), 178-198 (GLWM…LLTS), 203-223 (SVLT…ITAL), 230-250 (LLFI…IYAG), 325-345 (VVET…TAFF), and 361-381 (MVLF…IDIL).

The protein localises to the cell membrane. Its pathway is glycan metabolism; exopolysaccharide biosynthesis. Its function is as follows. Involved in the production of exopolysaccharide. In Rhizobium meliloti (strain 1021) (Ensifer meliloti), this protein is Exopolysaccharide production protein ExoQ (exoQ).